We begin with the raw amino-acid sequence, 255 residues long: Geranylgeranylglyceryl phosphate synthase (255 aa).

Residues aspartate 25 and serine 54 each coordinate Mg(2+). Sn-glycerol 1-phosphate is bound by residues 173-179 (YLEGGSG), 203-204 (GG), and 225-226 (GT).

This sequence belongs to the GGGP/HepGP synthase family. Group II subfamily. It depends on Mg(2+) as a cofactor.

The protein resides in the cytoplasm. The enzyme catalyses sn-glycerol 1-phosphate + (2E,6E,10E)-geranylgeranyl diphosphate = sn-3-O-(geranylgeranyl)glycerol 1-phosphate + diphosphate. The protein operates within membrane lipid metabolism; glycerophospholipid metabolism. Functionally, prenyltransferase that catalyzes the transfer of the geranylgeranyl moiety of geranylgeranyl diphosphate (GGPP) to the C3 hydroxyl of sn-glycerol-1-phosphate (G1P). This reaction is the first ether-bond-formation step in the biosynthesis of archaeal membrane lipids. This is Geranylgeranylglyceryl phosphate synthase from Thermofilum pendens (strain DSM 2475 / Hrk 5).